The following is a 489-amino-acid chain: Glycogen synthase (489 aa).

Residue Arg-20 coordinates ADP-alpha-D-glucose.

Belongs to the glycosyltransferase 1 family. Bacterial/plant glycogen synthase subfamily.

The enzyme catalyses [(1-&gt;4)-alpha-D-glucosyl](n) + ADP-alpha-D-glucose = [(1-&gt;4)-alpha-D-glucosyl](n+1) + ADP + H(+). Its pathway is glycan biosynthesis; glycogen biosynthesis. Its function is as follows. Synthesizes alpha-1,4-glucan chains using ADP-glucose. This chain is Glycogen synthase, found in Chlorobium limicola (strain DSM 245 / NBRC 103803 / 6330).